We begin with the raw amino-acid sequence, 83 residues long: UPF0297 protein Moth_1643 (83 aa).

It belongs to the UPF0297 family.

The protein is UPF0297 protein Moth_1643 of Moorella thermoacetica (strain ATCC 39073 / JCM 9320).